Reading from the N-terminus, the 87-residue chain is Small ribosomal subunit protein uS17 (87 aa).

It belongs to the universal ribosomal protein uS17 family. As to quaternary structure, part of the 30S ribosomal subunit.

One of the primary rRNA binding proteins, it binds specifically to the 5'-end of 16S ribosomal RNA. This chain is Small ribosomal subunit protein uS17, found in Bacillus subtilis (strain 168).